We begin with the raw amino-acid sequence, 93 residues long: Large ribosomal subunit protein uL23cz/uL23cy (93 aa).

This sequence belongs to the universal ribosomal protein uL23 family. As to quaternary structure, part of the 50S ribosomal subunit.

The protein localises to the plastid. It localises to the chloroplast. Binds to 23S rRNA. This is Large ribosomal subunit protein uL23cz/uL23cy (rpl23-A) from Lactuca sativa (Garden lettuce).